Reading from the N-terminus, the 149-residue chain is Large ribosomal subunit protein bL9 (149 aa).

This sequence belongs to the bacterial ribosomal protein bL9 family.

In terms of biological role, binds to the 23S rRNA. The chain is Large ribosomal subunit protein bL9 from Acidothermus cellulolyticus (strain ATCC 43068 / DSM 8971 / 11B).